We begin with the raw amino-acid sequence, 2549 residues long: Serine/threonine-protein kinase mTOR (2549 aa).

N-acetylmethionine is present on Met1. The segment at 1–651 is interaction with NBN; it reads MLGTGPAVAT…HVVSQTAVQV (651 aa). HEAT repeat units follow at residues 16–53, 55–99, 100–137, 138–179, 180–220, 222–276, 277–313, 314–364, 365–409, 410–445, 446–494, 495–529, 530–563, 564–596, 597–636, 637–683, 686–724, 727–766, 769–811, 814–853, 857–893, 894–942, 943–988, 989–1027, 1029–1068, 1069–1105, 1106–1144, 1145–1188, 1189–1225, 1226–1273, 1274–1311, and 1312–1345; these read SSNV…MELR, MSQE…VEGG, NSTR…AMAG, DTFT…AISV, PTFF…LILT, QREP…RISS, MEGE…PRHI, TPFT…CCRD, LMEE…AFTD, TQYL…VAVR, SEFK…RAMG, PGIQ…RQIP, QLKK…GLAH, QLAS…EFEG, HSLT…SIHL, ISGH…DERF, HLAQ…MNPA, MPFL…NAPR, RPYM…VSGL, RKWV…STGY, PYRK…LLGA, LDPY…GNLP, LDEF…KCVQ, FLPQ…KSHI, PYMD…GEFK, LYLP…LFGA, NLDD…RLTE, SLDF…GKKY, QIFI…LADE, EEDP…GAAR, RVSK…QAYN, and PMAR…ELAL. Ser567 is modified (phosphoserine). Residue Thr1162 is modified to Phosphothreonine. Lys1218 carries the post-translational modification N6-acetyllysine. Ser1261 is modified (phosphoserine). TPR repeat units follow at residues 1346 to 1382, 1383 to 1408, 1409 to 1442, 1443 to 1473, 1474 to 1507, 1508 to 1541, 1542 to 1574, 1575 to 1614, 1615 to 1649, 1650 to 1693, 1694 to 1731, 1732 to 1786, 1787 to 1846, 1898 to 1930, 1931 to 1970, and 1971 to 2005; these read TSQD…GIVL, LGER…QKGP, TPAI…HFGE, LEIQ…NKED, PELM…VNDE, TQAK…RDTH, DGAF…LDAE, LTAM…RREI, IRQI…PHED, MRTW…PTAH, PQVT…AQHA, IATE…DRSW, YKAW…STEG, NNLQ…VKAI, QIDT…YHPQ, and ALIY…SNTL. In terms of domain architecture, FAT spans 1382–1982; the sequence is LLGERAAKCR…IYPLTVASKS (601 aa). 1D-myo-inositol hexakisphosphate is bound by residues Lys1662, Lys1702, and Arg1749. A compositionally biased stretch (low complexity) spans 1825–1860; that stretch reads ITNATTAATTAASAAAATSTEGSNSESEAESNENSP. Residues 1825 to 1867 form a disordered region; it reads ITNATTAATTAASAAAATSTEGSNSESEAESNENSPTPSPLQK. Positions 2012–2144 are sufficient for interaction with the FKBP1A/rapamycin complex; that stretch reads VSEELIRVAI…DLELAVPGTY (133 aa). Lys2066 is covalently cross-linked (Glycyl lysine isopeptide (Lys-Gly) (interchain with G-Cter in ubiquitin)). A PI3K/PI4K catalytic domain is found at 2156 to 2469; sequence IAPSLQVITS…GVELGEPAHK (314 aa). Position 2159 is a phosphoserine; by TBK1 (Ser2159). The segment at 2162 to 2168 is G-loop; it reads VITSKQR. Thr2164 carries the phosphothreonine modification. Residues Ser2165 and Gln2167 each contribute to the ATP site. Thr2173 carries the phosphothreonine; by PKB/AKT1 modification. ATP contacts are provided by Leu2185, Lys2187, Glu2190, Tyr2225, Gly2238, Trp2239, Val2240, and Thr2245. The segment at 2258-2296 is interaction with MLST8; the sequence is KILLNIEHRIMLRMAPDYDHLTLMQKVEVFEHAVNNTAG. Residues 2335-2343 form a catalytic loop region; it reads GLGDRHPSN. Position 2343 (Asn2343) interacts with Mg(2+). ATP is bound by residues Met2345 and Ile2356. Residues 2355–2380 form an activation loop region; sequence HIDFGDCFEVAMTREKFPEKIPFRLT. Residue Asp2357 coordinates Mg(2+). Residue Thr2446 is modified to Phosphothreonine; by RPS6KB1. Ser2448 is modified (phosphoserine; by RPS6KB1). Phosphoserine occurs at positions 2478 and 2481. An FATC domain is found at 2517–2549; that stretch reads DTLDVPTQVELLIKQATSHENLCQCYIGWCPFW.

Belongs to the PI3/PI4-kinase family. In terms of assembly, part of the mechanistic target of rapamycin complex 1 (mTORC1) which contains MTOR, MLST8 and RPTOR. The mTORC1 complex is a 1 Md obligate dimer of two stoichiometric heterotetramers with overall dimensions of 290 A x 210 A x 135 A. It has a rhomboid shape and a central cavity, the dimeric interfaces are formed by interlocking interactions between the two MTOR and the two RPTOR subunits. The MLST8 subunit forms distal foot-like protuberances, and contacts only one MTOR within the complex, while the small AKT1S1/PRAS40 localizes to the midsection of the central core, in close proximity to RPTOR. mTORC1 associates with AKT1S1/PRAS40, which inhibits its activity by blocking MTOR substrate-recruitment site. Component of the mechanistic target of rapamycin complex 2 (mTORC2), consisting in two heterotretramers composed of MTOR, MLST8, RICTOR and MAPKAP1/SIN1. Interacts with PLPP7 and PML. Interacts with PRR5 and RICTOR; the interaction is direct within the mTORC2 complex and interaction with RICTOR is enhanced by deubiquitination of RICTOR by USP9X. mTORC1 and mTORC2 associate with DEPTOR, which regulates their activity. Interacts with WAC; WAC positively regulates MTOR activity by promoting the assembly of the TTT complex composed of TELO2, TTI1 and TTI2 and the RUVBL complex composed of RUVBL1 and RUVBL2 into the TTT-RUVBL complex which leads to the dimerization of the mTORC1 complex and its subsequent activation. Interacts with UBQLN1. Interacts with TTI1 and TELO2. Interacts with CLIP1; phosphorylates and regulates CLIP1. Interacts with NBN. Interacts with HTR6. Interacts with BRAT1. Interacts with MEAK7 (via C-terminal domain); the interaction increases upon nutrient stimulation. Interacts with TM4SF5; the interaction is positively regulated by arginine and is negatively regulated by leucine. Interacts with GPR137B. Interacts with NCKAP1L. Interacts with TPCN1 and TPCN2; the interaction is required for TPCN1 and TPCN2 sensitivity to ATP. Interacts with ATP6V1A and with CRYAB, forming a ternary complex. Interacts with SLC38A7; this interaction mediates the recruitment of mTORC1 to the lysosome and its subsequent activation. Interacts with TSPAN8. Autophosphorylates when part of mTORC1 or mTORC2. Phosphorylation at Ser-1261, Ser-2159 and Thr-2164 promotes autophosphorylation. Phosphorylated at Ser-2448 by RPS6KB1. Phosphorylation in the kinase domain modulates the interactions of MTOR with RPTOR and AKT1S1/PRAS40 and leads to increased intrinsic mTORC1 kinase activity. Phosphorylation at Ser-2159 by TBK1 in response to growth factors and pathogen recognition receptors promotes mTORC1 activity. Phosphorylation at Ser-2159 by TBK1 in response to EGF growth factor promotes mTORC2 activity, leading to AKT1 phosphorylation and activation. Phosphorylation at Thr-2173 in the ATP-binding region by AKT1 strongly reduces kinase activity. In terms of processing, ubiquitinated at Lys-2066 by the SCF(FBXO22) complex via 'Lys-27'-linked ubiquitination prevents mTORC1 substrate recruitment.

It is found in the lysosome membrane. Its subcellular location is the endoplasmic reticulum membrane. The protein resides in the golgi apparatus membrane. It localises to the cell membrane. The protein localises to the mitochondrion outer membrane. It is found in the cytoplasm. Its subcellular location is the nucleus. The protein resides in the PML body. It localises to the microsome membrane. The protein localises to the cytoplasmic vesicle. It is found in the phagosome. It carries out the reaction L-seryl-[protein] + ATP = O-phospho-L-seryl-[protein] + ADP + H(+). The catalysed reaction is L-threonyl-[protein] + ATP = O-phospho-L-threonyl-[protein] + ADP + H(+). It catalyses the reaction L-tyrosyl-[protein] + ATP = O-phospho-L-tyrosyl-[protein] + ADP + H(+). With respect to regulation, the mTORC1 complex is activated in response to nutrients, growth factors or amino acids: activation requires relocalization of the mTORC1 complex to lysosomes that is mediated by the Ragulator complex, SLC38A9, and the Rag GTPases RagA/RRAGA, RagB/RRAGB, RagC/RRAGC and RagD/RRAGD. Activation of mTORC1 by growth factors such as insulin involves AKT1-mediated phosphorylation of TSC1-TSC2, which leads to the activation of the RHEB GTPase a potent activator of the protein kinase activity of mTORC1. Insulin-stimulated and amino acid-dependent phosphorylation at Ser-1261 promotes autophosphorylation and the activation of mTORC1. On the other hand, low cellular energy levels can inhibit mTORC1 through activation of PRKAA1 while hypoxia inhibits mTORC1 through a REDD1-dependent mechanism which may also require PRKAA1. The kinase activity of MTOR within the mTORC1 complex is positively regulated by MLST8. The kinase activity of MTOR is inhibited by DEPTOR and AKT1S1. The non-canonical mTORC1 complex is independent of the RHEB GTPase and specifically mediates phosphorylation of MiT/TFE factors TFEB and TFE3 but not other mTORC1 substrates: it is activated by FLCN, which activates Rag GTPases RagC/RRAGC and RagD/RRAGD. MTOR is the target of the immunosuppressive and anti-cancer drug rapamycin which acts in complex with FKBP1A/FKBP12, and specifically inhibits its kinase activity. mTORC2 is also activated by growth factors, but seems to be nutrient-insensitive. mTORC2 associates and is directly activated by ribosomes. mTORC2 may also be regulated by RHEB but in an indirect manner through the PI3K signaling pathway. In terms of biological role, serine/threonine protein kinase which is a central regulator of cellular metabolism, growth and survival in response to hormones, growth factors, nutrients, energy and stress signals. MTOR directly or indirectly regulates the phosphorylation of at least 800 proteins. Functions as part of 2 structurally and functionally distinct signaling complexes mTORC1 and mTORC2 (mTOR complex 1 and 2). In response to nutrients, growth factors or amino acids, mTORC1 is recruited to the lysosome membrane and promotes protein, lipid and nucleotide synthesis by phosphorylating key regulators of mRNA translation and ribosome synthesis. This includes phosphorylation of EIF4EBP1 and release of its inhibition toward the elongation initiation factor 4E (eiF4E). Moreover, phosphorylates and activates RPS6KB1 and RPS6KB2 that promote protein synthesis by modulating the activity of their downstream targets including ribosomal protein S6, eukaryotic translation initiation factor EIF4B, and the inhibitor of translation initiation PDCD4. Stimulates the pyrimidine biosynthesis pathway, both by acute regulation through RPS6KB1-mediated phosphorylation of the biosynthetic enzyme CAD, and delayed regulation, through transcriptional enhancement of the pentose phosphate pathway which produces 5-phosphoribosyl-1-pyrophosphate (PRPP), an allosteric activator of CAD at a later step in synthesis, this function is dependent on the mTORC1 complex. Regulates ribosome synthesis by activating RNA polymerase III-dependent transcription through phosphorylation and inhibition of MAF1 an RNA polymerase III-repressor. Activates dormant ribosomes by mediating phosphorylation of SERBP1, leading to SERBP1 inactivation and reactivation of translation. In parallel to protein synthesis, also regulates lipid synthesis through SREBF1/SREBP1 and LPIN1. To maintain energy homeostasis mTORC1 may also regulate mitochondrial biogenesis through regulation of PPARGC1A. In the same time, mTORC1 inhibits catabolic pathways: negatively regulates autophagy through phosphorylation of ULK1. Under nutrient sufficiency, phosphorylates ULK1 at 'Ser-758', disrupting the interaction with AMPK and preventing activation of ULK1. Also prevents autophagy through phosphorylation of the autophagy inhibitor DAP. Also prevents autophagy by phosphorylating RUBCNL/Pacer under nutrient-rich conditions. Prevents autophagy by mediating phosphorylation of AMBRA1, thereby inhibiting AMBRA1 ability to mediate ubiquitination of ULK1 and interaction between AMBRA1 and PPP2CA. mTORC1 exerts a feedback control on upstream growth factor signaling that includes phosphorylation and activation of GRB10 a INSR-dependent signaling suppressor. Among other potential targets mTORC1 may phosphorylate CLIP1 and regulate microtubules. The mTORC1 complex is inhibited in response to starvation and amino acid depletion. The non-canonical mTORC1 complex, which acts independently of RHEB, specifically mediates phosphorylation of MiT/TFE factors TFEB and TFE3 in the presence of nutrients, promoting their cytosolic retention and inactivation. Upon starvation or lysosomal stress, inhibition of mTORC1 induces dephosphorylation and nuclear translocation of TFEB and TFE3, promoting their transcription factor activity. The mTORC1 complex regulates pyroptosis in macrophages by promoting GSDMD oligomerization. MTOR phosphorylates RPTOR which in turn inhibits mTORC1. As part of the mTORC2 complex, MTOR transduces signals from growth factors to pathways involved in proliferation, cytoskeletal organization, lipogenesis and anabolic output. In response to growth factors, mTORC2 phosphorylates and activates AGC protein kinase family members, including AKT (AKT1, AKT2 and AKT3), PKC (PRKCA, PRKCB and PRKCE) and SGK1. In contrast to mTORC1, mTORC2 is nutrient-insensitive. mTORC2 plays a critical role in AKT1 activation by mediating phosphorylation of different sites depending on the context, such as 'Thr-450', 'Ser-473', 'Ser-477' or 'Thr-479', facilitating the phosphorylation of the activation loop of AKT1 on 'Thr-308' by PDPK1/PDK1 which is a prerequisite for full activation. mTORC2 also regulates the phosphorylation of SGK1 at 'Ser-422'. mTORC2 may regulate the actin cytoskeleton, through phosphorylation of PRKCA, PXN and activation of the Rho-type guanine nucleotide exchange factors RHOA and RAC1A or RAC1B. The mTORC2 complex also phosphorylates various proteins involved in insulin signaling, such as FBXW8 and IGF2BP1. May also regulate insulin signaling by acting as a tyrosine protein kinase that catalyzes phosphorylation of IGF1R and INSR. Regulates osteoclastogenesis by adjusting the expression of CEBPB isoforms. Plays an important regulatory role in the circadian clock function; regulates period length and rhythm amplitude of the suprachiasmatic nucleus (SCN) and liver clocks. This Mus musculus (Mouse) protein is Serine/threonine-protein kinase mTOR.